The following is a 374-amino-acid chain: Tuliposide A-converting enzyme b2, amyloplastic (374 aa).

The transit peptide at 1-68 directs the protein to the amyloplast; sequence MSVALFCGPP…TNSSLSPSPT (68 aa). The Acyl-ester intermediate role is filled by serine 226. Active-site charge relay system residues include aspartate 316 and histidine 348.

It belongs to the AB hydrolase superfamily. In terms of assembly, homodimer. In terms of tissue distribution, highly expressed in pistil and bulb scales. Lower expression in stem, and barely detected in root, leaf, petal and stamen.

It is found in the plastid. Its subcellular location is the amyloplast. The enzyme catalyses 6-tuliposide A = tulipalin A + D-glucose. Lactone-forming carboxylesterases, specifically catalyzing intramolecular transesterification, but not hydrolysis. Involved in the biosynthesis of tulipalins, defensive chemicals that show antimicrobial activities against a broad range of strains of bacteria and fungi. Substrates are 6-tuliposide A &gt; 6-tuliposide B. This chain is Tuliposide A-converting enzyme b2, amyloplastic (TCEA-B2), found in Tulipa gesneriana (Garden tulip).